The primary structure comprises 449 residues: Type 3 secretion system ATPase (449 aa).

ATP is bound at residue 178–183 (GCGKTT).

Belongs to the ATPase alpha/beta chains family. T3SS ATPase subfamily. The core secretion machinery of the T3SS is composed of approximately 20 different proteins, including cytoplasmic components, a base, an export apparatus and a needle. This subunit is part of the cytosolic complex. Forms homododecamers.

The protein resides in the cytoplasm. It catalyses the reaction ATP + H2O + cellular proteinSide 1 = ADP + phosphate + cellular proteinSide 2.. Its function is as follows. ATPase component of the type III secretion system (T3SS), also called injectisome, which is used to inject bacterial effector proteins into eukaryotic host cells. Acts as a molecular motor to provide the energy that is required for the export of proteins. Required for type III secretion apparatus (T3SA) formation, proper protein secretion, host cell invasion and virulence. May play a critical role in T3SS substrate recognition, disassembly of the effector/chaperone complex and unfolding of the effector in an ATP-dependent manner prior to secretion. This is Type 3 secretion system ATPase from Pseudomonas syringae pv. tomato (strain ATCC BAA-871 / DC3000).